We begin with the raw amino-acid sequence, 128 residues long: Large ribosomal subunit protein bL19 (128 aa).

Belongs to the bacterial ribosomal protein bL19 family.

In terms of biological role, this protein is located at the 30S-50S ribosomal subunit interface and may play a role in the structure and function of the aminoacyl-tRNA binding site. In Azoarcus sp. (strain BH72), this protein is Large ribosomal subunit protein bL19.